A 1352-amino-acid chain; its full sequence is Stress response protein NST1 (1352 aa).

The segment covering 1 to 12 has biased composition (polar residues); the sequence is MSSKSQQPPTGL. Disordered stretches follow at residues 1–66, 216–422, 503–522, 531–616, 651–693, 726–880, 978–1118, 1139–1275, and 1307–1336; these read MSSK…FFNF, NANA…TQSS, NGLR…VEVD, DHRA…FLSF, RRSV…AEEG, LREL…IAKE, GLKS…DDAF, GSLI…GAGV, and GGTA…HQQQ. Over residues 16–25 the composition is skewed to basic residues; sequence AAKKRAKKAA. The span at 26–45 shows a compositional bias: low complexity; it reads KQSQNPQPQSAPQTSSQTPA. The span at 46 to 59 shows a compositional bias: pro residues; sequence SVPPLPPASVPDPL. The segment covering 218 to 229 has biased composition (polar residues); it reads NARSFPSPQQTI. The segment covering 242–254 has biased composition (acidic residues); sequence REEEYDDEEEIEE. The segment covering 268–277 has biased composition (basic residues); it reads KKNKKKKKKG. Residues 287–300 show a composition bias toward pro residues; sequence VEPPAPLPPLPPPS. Low complexity predominate over residues 317 to 330; that stretch reads LPTHQPQPLSQQPP. Pro residues predominate over residues 331–349; sequence SLNPLPPPAPASAPTPTPP. Low complexity predominate over residues 368–388; it reads PARSARAAGKAPASAAPPHNA. A compositionally biased stretch (basic and acidic residues) spans 531–541; the sequence is DHRAPELHDHD. Positions 542–583 are enriched in acidic residues; sequence PDDLDGEESEEYDDDDDYADDDELDDDDIGTDEADVGDEIDE. The segment covering 653-664 has biased composition (basic and acidic residues); the sequence is SVREEQNLRDMQ. Residues 665–680 show a composition bias toward acidic residues; sequence EETDEEEEEEDDDESR. Composition is skewed to basic and acidic residues over residues 681 to 693, 726 to 749, and 759 to 880; these read DEPM…AEEG, LREL…EAQK, and QKAE…IAKE. Positions 712–943 form a coiled coil; sequence AYRERVAKQR…AAQQAQRERA (232 aa). Residues 1008-1020 show a composition bias toward polar residues; it reads TNATPGRSMQKTP. Pro residues predominate over residues 1153-1164; that stretch reads PTPPAPIAPPNL. 2 stretches are compositionally biased toward polar residues: residues 1173–1186 and 1208–1219; these read SDGQ…LRST and QPQQRRPTTSWD.

This sequence belongs to the NST1 family.

Its subcellular location is the cytoplasm. Functionally, may act as a negative regulator of salt tolerance. The polypeptide is Stress response protein NST1 (NST1) (Cryptococcus neoformans var. neoformans serotype D (strain JEC21 / ATCC MYA-565) (Filobasidiella neoformans)).